We begin with the raw amino-acid sequence, 564 residues long: MSYIVDLQVRGSSLRVIKCMFREDEQISSLHSGSDSKQNSNKKLGEFLNLLKAVVKRKLESFPKDRLKTSIITGQELMREGQGSIEIKDPPTEAQQHLIRSLAKVLLHQFSSINGKVNTVNEGQDNLFLSLFVKKISIEQQSTSHVSIKLNFHEKINLGQHIDSILDSEETNESDTYHMGSVDEFIIYPFCCLEEQDELKNGSILSTEFDKIDLELDEDDGFEGETLNNCINSVGNFDIPLSKQTLNLVNISYLPGTTFEGQWESLYFGNNIKERLYSYATISLKIARFKQTGDSNQEDITTLITNNKLLLVHGPPGTGKTTLCKALCQKLSVRREFSDGSDTIDTNYKGIIIELSCARIFSKWFGESSKNISIVFKDIEELLKVNEGRGIFICLLIDEVEAIASSRTNLSSRNESTDGIRVVNTLLTQLDRLKKYHNFLALATSNLLDSLDDAFVDRADGVFYVGNPTAEGILHILKVCIEEMITSGIILFHARSTGVKFFNKYQDILRKIAIKCSTVDISGRTIRKLPLMCLSEYFRTFPVDDDEFVLALAMSARKLSAARK.

Residue 314–321 participates in ATP binding; that stretch reads GPPGTGKT.

Belongs to the AAA ATPase family. PCH2 subfamily.

It is found in the nucleus. It localises to the nucleolus. Its subcellular location is the chromosome. Its function is as follows. Required for the pachytene checkpoint, the meiotic checkpoint that prevents chromosome segregation when defects in recombination and synaptonemal complex formation occurred. Represses meiotic recombination in the rDNA, probably by excluding the meiosis-specific protein HOP1 from the nucleolar region. This is Pachytene checkpoint protein 2 (PCH2) from Saccharomyces cerevisiae (strain ATCC 204508 / S288c) (Baker's yeast).